The primary structure comprises 1741 residues: DNA-directed RNA polymerase III subunit RPC1 (1741 aa).

Zn(2+) contacts are provided by Cys-79, Cys-82, Cys-89, His-92, Cys-119, Cys-122, and Cys-160. Mg(2+) is bound by residues Asp-722, Asp-724, and Asp-726. The interval 1099 to 1111 (PFEFLAHARAGRD) is bridging helix. Positions 1719-1741 (RHANKRSWSRGKERHASLKPKNR) are disordered.

This sequence belongs to the RNA polymerase beta' chain family. As to quaternary structure, component of the RNA polymerase III (Pol III) complex consisting of 17 subunits.

The protein resides in the nucleus. The enzyme catalyses RNA(n) + a ribonucleoside 5'-triphosphate = RNA(n+1) + diphosphate. Its function is as follows. DNA-dependent RNA polymerase catalyzes the transcription of DNA into RNA using the four ribonucleoside triphosphates as substrates. Largest and catalytic core component of RNA polymerase III which synthesizes small RNAs, such as 5S rRNA and tRNAs. Forms the polymerase active center together with the second largest subunit. A single-stranded DNA template strand of the promoter is positioned within the central active site cleft of Pol III. A bridging helix emanates from RPC1 and crosses the cleft near the catalytic site and is thought to promote translocation of Pol III by acting as a ratchet that moves the RNA-DNA hybrid through the active site by switching from straight to bent conformations at each step of nucleotide addition. The chain is DNA-directed RNA polymerase III subunit RPC1 (RPOA3) from Giardia intestinalis (Giardia lamblia).